Consider the following 813-residue polypeptide: Serine/threonine-protein kinase HAL5 (813 aa).

Disordered stretches follow at residues 27–83, 95–117, 157–277, and 429–455; these read NSIS…PGSY, HLNSGKQSVTSSRAQSISSDGNG, SISR…EDGN, and GLKNKDGQSRSGSQSGSASSSLHTSPV. Residues 35–72 are compositionally biased toward basic and acidic residues; the sequence is NGKKEAFVQSGTREDQRYNEEHHLKKIDTKASVPKKDT. Over residues 157–169 the composition is skewed to polar residues; sequence SISRKNSIQQSRK. Over residues 177–186 the composition is skewed to basic and acidic residues; that stretch reads VDKRNAHFPD. Positions 206-219 are enriched in low complexity; that stretch reads NQINSISNISRSGS. Residues 226–274 are compositionally biased toward polar residues; the sequence is ILSSKSRRGSNAMSIRSPSVRSTASIVSGNSNSEVITPSSKPATQNISE. Over residues 437–455 the composition is skewed to low complexity; that stretch reads SRSGSQSGSASSSLHTSPV. Residues 477 to 800 enclose the Protein kinase domain; sequence GDPVGVIGHG…VDKILHSSWM (324 aa). Residues 483–491 and Lys520 contribute to the ATP site; that span reads IGHGTYGVV. The active-site Proton acceptor is Asp651.

Belongs to the protein kinase superfamily. CAMK Ser/Thr protein kinase family. NPR/HAL subfamily. HAL5 sub-subfamily.

The catalysed reaction is L-seryl-[protein] + ATP = O-phospho-L-seryl-[protein] + ADP + H(+). It carries out the reaction L-threonyl-[protein] + ATP = O-phospho-L-threonyl-[protein] + ADP + H(+). Its function is as follows. Protein kinase involved in salt tolerance and pH sensitivity, probably by regulating plasma membrane potential and cation influx. Positively controls the TRK1 potassium transport system in response to potassium starvation. Stabilizes plasma membrane nutrient transporters in the plasma membrane by preventing their vacuolar sorting and degradation. This chain is Serine/threonine-protein kinase HAL5 (HAL5), found in Candida glabrata (strain ATCC 2001 / BCRC 20586 / JCM 3761 / NBRC 0622 / NRRL Y-65 / CBS 138) (Yeast).